The following is a 507-amino-acid chain: 3-[(3aS,4S,7aS)-7a-methyl-1,5-dioxo-octahydro-1H-inden-4-yl]propanoyl:CoA ligase (507 aa).

ATP is bound by residues 177 to 185 (TSGTTGRSK), Asp-391, Arg-406, and Lys-497.

It belongs to the ATP-dependent AMP-binding enzyme family.

It catalyses the reaction 3-[(3aS,4S,7aS)-7a-methyl-1,5-dioxo-octahydro-1H-inden-4-yl]propanoate + ATP + CoA = 3-[(3aS,4S,7aS)-7a-methyl-1,5-dioxo-octahydro-1H-inden-4-yl]propanoyl-CoA + AMP + diphosphate. The enzyme catalyses 5-hydroxy-3-[(3aS,4S,5R,7aS)-7a-methyl-1,5-dioxo-octahydro-1H-inden-4-yl]propanoate + ATP + CoA = 3-[(3aS,4S,5R,7aS)-5-hydroxy-7a-methyl-1-oxo-octahydro-1H-inden-4-yl]propanoyl-CoA + AMP + diphosphate. In terms of biological role, involved in the catabolism of the rings C and D of cholesterol. Catalyzes the ATP-dependent CoA thioesterification of 3aalpha-H-4alpha(3'-propanoate)-7abeta-methylhexahydro-1,5-indanedione (HIP) to yield HIP-CoA. It can also use the hydroxylated analogs of HIP, 5alpha-OH HIP and 1beta-OH HIP. It requires that the side chain at C17 is completely removed. This is 3-[(3aS,4S,7aS)-7a-methyl-1,5-dioxo-octahydro-1H-inden-4-yl]propanoyl:CoA ligase from Mycobacterium tuberculosis (strain ATCC 25618 / H37Rv).